The chain runs to 248 residues: 4-hydroxy-tetrahydrodipicolinate reductase (248 aa).

NAD(+)-binding positions include 9-14 (GAKGRV), 77-79 (GTT), and 104-107 (APNF). The active-site Proton donor/acceptor is His-134. His-135 contributes to the (S)-2,3,4,5-tetrahydrodipicolinate binding site. Lys-138 serves as the catalytic Proton donor. 144-145 (GT) serves as a coordination point for (S)-2,3,4,5-tetrahydrodipicolinate.

Belongs to the DapB family.

Its subcellular location is the cytoplasm. The enzyme catalyses (S)-2,3,4,5-tetrahydrodipicolinate + NAD(+) + H2O = (2S,4S)-4-hydroxy-2,3,4,5-tetrahydrodipicolinate + NADH + H(+). It carries out the reaction (S)-2,3,4,5-tetrahydrodipicolinate + NADP(+) + H2O = (2S,4S)-4-hydroxy-2,3,4,5-tetrahydrodipicolinate + NADPH + H(+). The protein operates within amino-acid biosynthesis; L-lysine biosynthesis via DAP pathway; (S)-tetrahydrodipicolinate from L-aspartate: step 4/4. Functionally, catalyzes the conversion of 4-hydroxy-tetrahydrodipicolinate (HTPA) to tetrahydrodipicolinate. The polypeptide is 4-hydroxy-tetrahydrodipicolinate reductase (Corynebacterium efficiens (strain DSM 44549 / YS-314 / AJ 12310 / JCM 11189 / NBRC 100395)).